A 464-amino-acid polypeptide reads, in one-letter code: Putative protein TIC 214 C-terminal part (464 aa).

Belongs to the TIC214 family. Part of the Tic complex.

It localises to the plastid. The protein resides in the chloroplast. Involved in protein precursor import into chloroplasts. May be part of an intermediate translocation complex acting as a protein-conducting channel at the inner envelope. This Marchantia polymorpha (Common liverwort) protein is Putative protein TIC 214 C-terminal part.